We begin with the raw amino-acid sequence, 634 residues long: Beta-ketoacyl-[acyl-carrier-protein] synthase FabY (634 aa).

Residues Glu-78 to Ser-546 form the Ketosynthase family 3 (KS3) domain. Residues Cys-281, His-434, and His-472 each act as for beta-ketoacyl synthase activity in the active site.

This sequence belongs to the thiolase-like superfamily. Beta-ketoacyl-ACP synthases family. As to quaternary structure, homodimer.

The enzyme catalyses malonyl-[ACP] + acetyl-CoA + H(+) = 3-oxobutanoyl-[ACP] + CO2 + CoA. Its pathway is lipid metabolism; fatty acid biosynthesis. Functionally, involved in the initiation of the fatty acid biosynthesis. Catalyzes the condensation of acetyl coenzyme A (acetyl-CoA) with malonyl-acyl carrier protein (ACP) to make the fatty acid synthesis (FAS) primer beta-acetoacetyl-ACP. It can also use short-chain acyl-CoA as substrates, including butyryl-CoA, and hexanoyl-CoA, but does not use any of the longer chain acyl-CoA substrates. The polypeptide is Beta-ketoacyl-[acyl-carrier-protein] synthase FabY (fabY) (Pseudomonas aeruginosa (strain ATCC 15692 / DSM 22644 / CIP 104116 / JCM 14847 / LMG 12228 / 1C / PRS 101 / PAO1)).